We begin with the raw amino-acid sequence, 150 residues long: Putative biopolymer transport protein ExbB-like 2 (150 aa).

The next 3 membrane-spanning stretches (helical) occupy residues 5-25 (VDYG…AIAI), 63-83 (APYI…MDLG), and 97-117 (LALA…AIVI).

The protein belongs to the ExbB/TolQ family.

The protein resides in the cell inner membrane. This Helicobacter pylori (strain J99 / ATCC 700824) (Campylobacter pylori J99) protein is Putative biopolymer transport protein ExbB-like 2.